A 264-amino-acid polypeptide reads, in one-letter code: Proteasome subunit beta type-4 (264 aa).

Methionine 1 is subject to N-acetylmethionine. Positions 1–45 (MEAFWESRAGHWAGGPAPGQFYRIPATPSGLMDPASAPCEGPITR) are excised as a propeptide. Tyrosine 102 carries the post-translational modification Phosphotyrosine.

It belongs to the peptidase T1B family. In terms of assembly, the 26S proteasome consists of a 20S proteasome core and two 19S regulatory subunits. The 20S proteasome core is a barrel-shaped complex made of 28 subunits that are arranged in four stacked rings. The two outer rings are each formed by seven alpha subunits, and the two inner rings are formed by seven beta subunits. The proteolytic activity is exerted by three beta-subunits PSMB5, PSMB6 and PSMB7. Forms a ternary complex with SMAD1 and OAZ1 before PSMB4 is incorporated into the 20S proteasome. Interacts with PRPF19. As to expression, detected in liver (at protein level).

Its subcellular location is the cytoplasm. The protein resides in the nucleus. Its function is as follows. Non-catalytic component of the 20S core proteasome complex involved in the proteolytic degradation of most intracellular proteins. This complex plays numerous essential roles within the cell by associating with different regulatory particles. Associated with two 19S regulatory particles, forms the 26S proteasome and thus participates in the ATP-dependent degradation of ubiquitinated proteins. The 26S proteasome plays a key role in the maintenance of protein homeostasis by removing misfolded or damaged proteins that could impair cellular functions, and by removing proteins whose functions are no longer required. Associated with the PA200 or PA28, the 20S proteasome mediates ubiquitin-independent protein degradation. This type of proteolysis is required in several pathways including spermatogenesis (20S-PA200 complex) or generation of a subset of MHC class I-presented antigenic peptides (20S-PA28 complex). SMAD1/OAZ1/PSMB4 complex mediates the degradation of the CREBBP/EP300 repressor SNIP1. This is Proteasome subunit beta type-4 (Psmb4) from Mus musculus (Mouse).